A 557-amino-acid polypeptide reads, in one-letter code: Potassium-transporting ATPase potassium-binding subunit (557 aa).

The next 12 membrane-spanning stretches (helical) occupy residues 5–25, 63–83, 132–152, 170–190, 253–273, 283–303, 329–349, 356–376, 379–399, 416–436, 484–504, and 526–546; these read GFLLIATFLLVLMVLARPLGS, LCAILGLNMLGLAVLFFMLLG, GLTVQNFLSAASGIAVIFALI, LLRITLWVLVPVALLIALFFI, FVQMLAIFLIPTALCFAFGEV, LLWAMSVIFVICVGVVMWAEV, VLVSSLFAVVTTAASCGAVIA, ALGGMVPMWLMQIGEVVFGGV, GLYGMMLFVLLAVFIAGLMIG, LTALAILVTPTLVLMGAALAM, LLAFCMFVGRFGVIIPVMAIA, and LFVGLLIGTVLLVGALTFIPA.

Belongs to the KdpA family. As to quaternary structure, the system is composed of three essential subunits: KdpA, KdpB and KdpC.

Its subcellular location is the cell inner membrane. Part of the high-affinity ATP-driven potassium transport (or Kdp) system, which catalyzes the hydrolysis of ATP coupled with the electrogenic transport of potassium into the cytoplasm. This subunit binds the periplasmic potassium ions and delivers the ions to the membrane domain of KdpB through an intramembrane tunnel. The polypeptide is Potassium-transporting ATPase potassium-binding subunit (Escherichia coli O9:H4 (strain HS)).